A 429-amino-acid chain; its full sequence is Probable M18 family aminopeptidase 2 (429 aa).

Residues histidine 82, histidine 156, and histidine 401 each coordinate Zn(2+).

Belongs to the peptidase M18 family. Requires Zn(2+) as cofactor.

The polypeptide is Probable M18 family aminopeptidase 2 (Ectopseudomonas mendocina (strain ymp) (Pseudomonas mendocina)).